We begin with the raw amino-acid sequence, 562 residues long: Phosphoglucomutase-1 (562 aa).

Met-1 bears the N-acetylmethionine mark. The residue at position 16 (Lys-16) is an N6-acetyllysine. Arg-23 contributes to the alpha-D-glucose 1,6-bisphosphate binding site. At Thr-115 the chain carries Phosphothreonine. Ser-117 serves as a coordination point for alpha-D-glucose 1,6-bisphosphate. Ser-117 (phosphoserine intermediate) is an active-site residue. A Mg(2+)-binding site is contributed by Ser-117. Phosphoserine occurs at positions 117 and 134. Thr-185 carries the phosphothreonine modification. Ser-201, Ser-206, and Ser-213 each carry phosphoserine. Asp-288, Asp-290, and Asp-292 together coordinate Mg(2+). The alpha-D-glucose 1,6-bisphosphate site is built by Asp-292 and Arg-293. Lys-349 is subject to N6-acetyllysine. Tyr-353 is subject to Phosphotyrosine. Residue Thr-357 coordinates alpha-D-glucose 1,6-bisphosphate. Ser-369 is modified (phosphoserine). Residues Glu-376, Ser-378, and Lys-389 each coordinate alpha-D-glucose 1,6-bisphosphate. Ser-378 is modified (phosphoserine). N6-succinyllysine is present on Lys-419. Thr-467 bears the Phosphothreonine; by PAK1 mark. Phosphoserine occurs at positions 477, 485, and 505. Phosphothreonine is present on Thr-507. 2 positions are modified to phosphoserine: Ser-509 and Ser-541.

The protein belongs to the phosphohexose mutase family. In terms of assembly, monomer. The cofactor is Mg(2+). Post-translationally, phosphorylation at Thr-467 by PAK1 significantly enhances enzymatic activity.

It is found in the cytoplasm. It catalyses the reaction alpha-D-glucose 1-phosphate = alpha-D-glucose 6-phosphate. It carries out the reaction O-phospho-L-seryl-[protein] + alpha-D-glucose 1-phosphate = alpha-D-glucose 1,6-bisphosphate + L-seryl-[protein]. The catalysed reaction is alpha-D-glucose 1,6-bisphosphate + L-seryl-[protein] = O-phospho-L-seryl-[protein] + alpha-D-glucose 6-phosphate. With respect to regulation, glucose-1,6-bisphosphate enhances phosphorylation of the active site Ser-117, and thereby increases enzyme activity. Functionally, catalyzes the reversible isomerization of alpha-D-glucose 1-phosphate to alpha-D-glucose 6-phosphate. The mechanism proceeds via the intermediate compound alpha-D-glucose 1,6-bisphosphate. This enzyme participates in both the breakdown and synthesis of glucose. This chain is Phosphoglucomutase-1 (PGM1), found in Homo sapiens (Human).